We begin with the raw amino-acid sequence, 510 residues long: RanBP-type and C3HC4-type zinc finger-containing protein 1 (510 aa).

Position 1 is an N-acetylmethionine (Met1). An interaction with IRF3 region spans residues 1–220 (MDEKTKKAEE…PGCEMCCRAR (220 aa)). An interaction with TAB2 region spans residues 1-270 (MDEKTKKAEE…NYLQHVQLDQ (270 aa)). Ser50 is modified (phosphoserine). One can recognise a Ubiquitin-like domain in the interval 55 to 119 (IRLWVSVEDA…DQETLHSHGV (65 aa)). Residues 69–131 (VTIWLTVRPD…NGDSAYLYLL (63 aa)) are interaction with RNF31. The interval 160-192 (LTLQPRGPLEPGPPKPGVPQEPGRGQPDAVPEP) is disordered. Pro residues predominate over residues 167–178 (PLEPGPPKPGVP). The RanBP2-type zinc finger occupies 193–222 (PPVGWQCPGCTFINKPTRPGCEMCCRARPE). Residues 233–261 (DEEERARLAGEEEALRQYQQRKQQQQEGN) adopt a coiled-coil conformation. The tract at residues 278 to 506 (EPAECPVCYS…VNGIPCHPSC (229 aa)) is TRIAD supradomain. The Zn(2+) site is built by Cys282, Cys285, Cys300, His302, Cys305, Cys308, and Cys323. The segment at 282–332 (CPVCYSVLAPGEAVVLRECLHTFCRECLQGTIRNSQEAEVSCPFIDNTYSC) adopts an RING-type 1 zinc-finger fold. Residue Tyr330 is modified to Phosphotyrosine. Zn(2+) contacts are provided by Cys332, Cys371, Cys376, Cys391, Cys394, Cys399, Cys402, His406, Cys411, Cys447, and Cys450. An IBR-type zinc finger spans residues 351–411 (QRFLDLGISI…CKAIHEQMNC (61 aa)). The segment at 447–476 (CPQCQIVVQKKDGCDWIRCTVCHTEICWVT) adopts an RING-type 2; atypical zinc-finger fold. Residue Cys460 is part of the active site. Zn(2+) contacts are provided by Cys465 and Cys468.

It belongs to the RBR family. Component of the LUBAC complex (linear ubiquitin chain assembly complex) which consists of SHARPIN, RBCK1 and RNF31. LUBAC has a MW of approximately 600 kDa suggesting a heteromultimeric assembly of its subunits. Interacts with beta-I-type (PRKCB1) and zeta-type protein kinase C (PRKCZ). Interacts with UBE2L3. Interacts with PRKCH. Associates with the TNF-R1 signaling complex (TNF-RSC) in a stimulation-dependent manner. Interacts with EYA1, TAB2, TAB3, MAP3K7 TRAF6 and RIPK1. Interacts with IRF3. In terms of assembly, interacts with IREB2 only in iron-rich conditions. As to quaternary structure, (Microbial infection) Interacts with hepatitis B virus/HBV protein HBx; this interaction is required to activate transcription of the viral genome. In terms of processing, auto-ubiquitinated. Auto-ubiquitination leads to degradation by the proteasome. Post-translationally, phosphorylated. In vitro, phosphorylation inhibits auto-ubiquitination activity. (Microbial infection) Ubiquitinated by S.flexneri E3 ubiquitin-protein ligases IpaH1.4 and IpaH2.5, leading to its degradation by the proteasome, thereby preventing formation of the bacterial ubiquitin coat and activation of innate immunity.

The enzyme catalyses [E2 ubiquitin-conjugating enzyme]-S-ubiquitinyl-L-cysteine + [acceptor protein]-L-lysine = [E2 ubiquitin-conjugating enzyme]-L-cysteine + [acceptor protein]-N(6)-ubiquitinyl-L-lysine.. It functions in the pathway protein modification; protein ubiquitination. E3 ubiquitin-protein ligase, which accepts ubiquitin from specific E2 ubiquitin-conjugating enzymes, such as UBE2L3/UBCM4, and then transfers it to substrates. Functions as an E3 ligase for oxidized IREB2 and both heme and oxygen are necessary for IREB2 ubiquitination. Promotes ubiquitination of TAB2 and IRF3 and their degradation by the proteasome. Component of the LUBAC complex which conjugates linear ('Met-1'-linked) polyubiquitin chains to substrates and plays a key role in NF-kappa-B activation and regulation of inflammation. LUBAC conjugates linear polyubiquitin to IKBKG and RIPK1 and is involved in activation of the canonical NF-kappa-B and the JNK signaling pathways. Linear ubiquitination mediated by the LUBAC complex interferes with TNF-induced cell death and thereby prevents inflammation. LUBAC is recruited to the TNF-R1 signaling complex (TNF-RSC) following polyubiquitination of TNF-RSC components by BIRC2 and/or BIRC3 and to conjugate linear polyubiquitin to IKBKG and possibly other components contributing to the stability of the complex. The LUBAC complex is also involved in innate immunity by conjugating linear polyubiquitin chains at the surface of bacteria invading the cytosol to form the ubiquitin coat surrounding bacteria. LUBAC is not able to initiate formation of the bacterial ubiquitin coat, and can only promote formation of linear polyubiquitins on pre-existing ubiquitin. The bacterial ubiquitin coat acts as an 'eat-me' signal for xenophagy and promotes NF-kappa-B activation. Together with OTULIN, the LUBAC complex regulates the canonical Wnt signaling during angiogenesis. Binds polyubiquitin of different linkage types. In Homo sapiens (Human), this protein is RanBP-type and C3HC4-type zinc finger-containing protein 1 (RBCK1).